A 466-amino-acid chain; its full sequence is 3-isopropylmalate dehydratase large subunit (466 aa).

3 residues coordinate [4Fe-4S] cluster: C347, C407, and C410.

Belongs to the aconitase/IPM isomerase family. LeuC type 1 subfamily. In terms of assembly, heterodimer of LeuC and LeuD. [4Fe-4S] cluster is required as a cofactor.

It catalyses the reaction (2R,3S)-3-isopropylmalate = (2S)-2-isopropylmalate. It functions in the pathway amino-acid biosynthesis; L-leucine biosynthesis; L-leucine from 3-methyl-2-oxobutanoate: step 2/4. Catalyzes the isomerization between 2-isopropylmalate and 3-isopropylmalate, via the formation of 2-isopropylmaleate. This chain is 3-isopropylmalate dehydratase large subunit, found in Pectobacterium carotovorum subsp. carotovorum (strain PC1).